The primary structure comprises 723 residues: Fatty acid oxidation complex subunit alpha (723 aa).

The segment at 1–189 (MIYQAKTLQV…KVGLLDAIVD (189 aa)) is enoyl-CoA hydratase/isomerase. Asp-296 contacts substrate. The tract at residues 311 to 723 (SQDTQHAAVL…FYSAQQVSAL (413 aa)) is 3-hydroxyacyl-CoA dehydrogenase. Residues Met-325, Asp-344, 401–403 (VVE), Lys-408, and Ser-430 each bind NAD(+). The For 3-hydroxyacyl-CoA dehydrogenase activity role is filled by His-451. Residue Asn-454 coordinates NAD(+). Substrate-binding residues include Asn-501 and Tyr-661.

It in the N-terminal section; belongs to the enoyl-CoA hydratase/isomerase family. In the C-terminal section; belongs to the 3-hydroxyacyl-CoA dehydrogenase family. In terms of assembly, heterotetramer of two alpha chains (FadB) and two beta chains (FadA).

It catalyses the reaction a (3S)-3-hydroxyacyl-CoA + NAD(+) = a 3-oxoacyl-CoA + NADH + H(+). The catalysed reaction is a (3S)-3-hydroxyacyl-CoA = a (2E)-enoyl-CoA + H2O. It carries out the reaction a 4-saturated-(3S)-3-hydroxyacyl-CoA = a (3E)-enoyl-CoA + H2O. The enzyme catalyses (3S)-3-hydroxybutanoyl-CoA = (3R)-3-hydroxybutanoyl-CoA. It catalyses the reaction a (3Z)-enoyl-CoA = a 4-saturated (2E)-enoyl-CoA. The catalysed reaction is a (3E)-enoyl-CoA = a 4-saturated (2E)-enoyl-CoA. The protein operates within lipid metabolism; fatty acid beta-oxidation. Its function is as follows. Involved in the aerobic and anaerobic degradation of long-chain fatty acids via beta-oxidation cycle. Catalyzes the formation of 3-oxoacyl-CoA from enoyl-CoA via L-3-hydroxyacyl-CoA. It can also use D-3-hydroxyacyl-CoA and cis-3-enoyl-CoA as substrate. This chain is Fatty acid oxidation complex subunit alpha, found in Vibrio cholerae serotype O1 (strain ATCC 39315 / El Tor Inaba N16961).